A 114-amino-acid chain; its full sequence is Cytochrome b-c1 complex subunit 1, mitochondrial (114 aa).

Lys31 carries the N6-acetyllysine modification.

It belongs to the peptidase M16 family. UQCRC1/QCR1 subfamily. Component of the ubiquinol-cytochrome c oxidoreductase (cytochrome b-c1 complex, complex III, CIII), a multisubunit enzyme composed of 11 subunits. The complex is composed of 3 respiratory subunits cytochrome b, cytochrome c1 and Rieske protein UQCRFS1, 2 core protein subunits UQCRC1/QCR1 and UQCRC2/QCR2, and 6 low-molecular weight protein subunits UQCRH/QCR6, UQCRB/QCR7, UQCRQ/QCR8, UQCR10/QCR9, UQCR11/QCR10 and subunit 9, the cleavage product of Rieske protein UQCRFS1. The complex exists as an obligatory dimer and forms supercomplexes (SCs) in the inner mitochondrial membrane with NADH-ubiquinone oxidoreductase (complex I, CI) and cytochrome c oxidase (complex IV, CIV), resulting in different assemblies (supercomplex SCI(1)III(2)IV(1) and megacomplex MCI(2)III(2)IV(2)). Interacts with UQCC6. Interacts with STMP1.

The protein localises to the mitochondrion inner membrane. Its function is as follows. Component of the ubiquinol-cytochrome c oxidoreductase, a multisubunit transmembrane complex that is part of the mitochondrial electron transport chain which drives oxidative phosphorylation. The respiratory chain contains 3 multisubunit complexes succinate dehydrogenase (complex II, CII), ubiquinol-cytochrome c oxidoreductase (cytochrome b-c1 complex, complex III, CIII) and cytochrome c oxidase (complex IV, CIV), that cooperate to transfer electrons derived from NADH and succinate to molecular oxygen, creating an electrochemical gradient over the inner membrane that drives transmembrane transport and the ATP synthase. The cytochrome b-c1 complex catalyzes electron transfer from ubiquinol to cytochrome c, linking this redox reaction to translocation of protons across the mitochondrial inner membrane, with protons being carried across the membrane as hydrogens on the quinol. In the process called Q cycle, 2 protons are consumed from the matrix, 4 protons are released into the intermembrane space and 2 electrons are passed to cytochrome c. The 2 core subunits UQCRC1/QCR1 and UQCRC2/QCR2 are homologous to the 2 mitochondrial-processing peptidase (MPP) subunits beta-MPP and alpha-MPP respectively, and they seem to have preserved their MPP processing properties. May be involved in the in situ processing of UQCRFS1 into the mature Rieske protein and its mitochondrial targeting sequence (MTS)/subunit 9 when incorporated into complex III. Seems to play an important role in the maintenance of proper mitochondrial function in nigral dopaminergic neurons. The chain is Cytochrome b-c1 complex subunit 1, mitochondrial from Mesocricetus auratus (Golden hamster).